A 469-amino-acid chain; its full sequence is GDP-fucose protein O-fucosyltransferase 3 (469 aa).

At Met-1–Arg-9 the chain is on the cytoplasmic side. The helical; Signal-anchor for type II membrane protein transmembrane segment at Phe-10–Val-30 threads the bilayer. Over Glu-31 to Trp-469 the chain is Lumenal. Asn-100, Asn-158, Asn-308, and Asn-333 each carry an N-linked (GlcNAc...) asparagine glycan. A disulfide bridge connects residues Cys-379 and Cys-382. N-linked (GlcNAc...) asparagine glycosylation occurs at Asn-455.

It belongs to the glycosyltransferase 10 family.

It localises to the endoplasmic reticulum membrane. It catalyses the reaction L-threonyl-[protein] + GDP-beta-L-fucose = 3-O-(alpha-L-fucosyl)-L-threonyl-[protein] + GDP + H(+). The catalysed reaction is L-seryl-[protein] + GDP-beta-L-fucose = 3-O-(alpha-L-fucosyl)-L-seryl-[protein] + GDP + H(+). The protein operates within protein modification; protein glycosylation. Its function is as follows. Protein O-fucosyltransferase that specifically catalyzes O-fucosylation of serine or threonine residues in EMI domains of target proteins. Attaches fucose through an O-glycosidic linkage. O-fucosylation of EMI domain-containing proteins may be required for facilitating protein folding and secretion. The chain is GDP-fucose protein O-fucosyltransferase 3 (fut10) from Xenopus laevis (African clawed frog).